We begin with the raw amino-acid sequence, 564 residues long: MATATIALQVNGQQGGGSEPAAAAAAAAAAVVAAGDKWKPPQGTESIKMENGQSTGTKLGLPPLTPEQQEALQKAKKYAMEQSIKSVLVKQTIAHQQQQLTNLQMAAVTMGFGDPLSPLQSMAAQRQRALAIMCRVYVGSIYYELGEDTIRQAFAPFGPIKSIDMSWDSVTMKHKGFAFVEYEVPEAAQLALEQMNSVMLGGRNIKVGRPSNIGQAQPIIDQLAEEARAFNRIYVASVHQDLSDDDIKSVFEAFGKIKSCTLARDPTTGKHKGYGFIEYEKAQSSQDAVSSMNLFDLGGQYLRVGKAVTPPMPLLTPATPGGLPPAAAVAAAAATAKITAQEAVAGAAVLGTLATPGLVSPALTLAQPLGALPQAVMAAQAPGVITGVTPARPPIPVTIPSVGVVNPILASPPTLGLLEPKKEKEEEELFPESERPEMLSEQEHMSISGSSARHMVMQKLLRKQESTVMVLRNMVDPKDIDDDLEGEVTEECGKFGAVNRVIIYQEKQGEEEDAEIIVKIFVEFSMASETHKAIQALNGRWFGGRKVVAEVYDQERFDNSDLSA.

Residues 1-521 (MATATIALQV…EDAEIIVKIF (521 aa)) form an inhibits homodimerization region. Positions 37–61 (KWKPPQGTESIKMENGQSTGTKLGL) are disordered. Lys-48 is covalently cross-linked (Glycyl lysine isopeptide (Lys-Gly) (interchain with G-Cter in SUMO2)). A Phosphothreonine modification is found at Thr-65. Residues 82–564 (QSIKSVLVKQ…ERFDNSDLSA (483 aa)) are inhibits transcriptional repression, interaction with ERCC3 and apoptosis induction. Lys-85 is covalently cross-linked (Glycyl lysine isopeptide (Lys-Gly) (interchain with G-Cter in SUMO2)). The residue at position 117 (Ser-117) is a Phosphoserine. RRM domains follow at residues 134-212 (CRVY…RPSN) and 231-309 (NRIY…KAVT). Ser-249 bears the Phosphoserine mark. Lys-256 is subject to N6-acetyllysine. Thr-319 is modified (phosphothreonine). The tract at residues 421–442 (KKEKEEEELFPESERPEMLSEQ) is disordered. Lys-424 participates in a covalent cross-link: Glycyl lysine isopeptide (Lys-Gly) (interchain with G-Cter in SUMO2). Residues 432–442 (ESERPEMLSEQ) are compositionally biased toward basic and acidic residues. Lys-459 carries the N6-acetyllysine modification. Lys-463 participates in a covalent cross-link: Glycyl lysine isopeptide (Lys-Gly) (interchain with G-Cter in SUMO2). In terms of domain architecture, RRM 3; atypical spans 467–554 (TVMVLRNMVD…RKVVAEVYDQ (88 aa)).

Belongs to the RRM half pint family. As to quaternary structure, homodimer. Associates with the spliceosome. Found in a complex with RO60 and Y5 RNA. Found in a complex with FUBP1 and far upstream element (FUSE) DNA segment. Interacts directly with ERCC3. Interacts with CDK7 and GTF2H1. Interacts with SRSF11/P54. Interacts with ARGLU1; interaction may be involved in ARGLU1-mediated modulation of alternative splicing.

The protein resides in the nucleus. Functionally, DNA- and RNA-binding protein, involved in several nuclear processes such as pre-mRNA splicing, apoptosis and transcription regulation. In association with FUBP1 regulates MYC transcription at the P2 promoter through the core-TFIIH basal transcription factor. Acts as a transcriptional repressor through the core-TFIIH basal transcription factor. Represses FUBP1-induced transcriptional activation but not basal transcription. Decreases ERCC3 helicase activity. Is also involved in pre-mRNA splicing. Promotes splicing of an intron with weak 3'-splice site and pyrimidine tract in a cooperative manner with U2AF2. Involved in apoptosis induction when overexpressed in HeLa cells. Modulates alternative splicing of several mRNAs. Binds to relaxed DNA of active promoter regions. Binds to the pyrimidine tract and 3'-splice site regions of pre-mRNA; binding is enhanced in presence of U2AF2. Binds to Y5 RNA in association with RO60. Binds to poly(U) RNA. The polypeptide is Poly(U)-binding-splicing factor PUF60 (Rattus norvegicus (Rat)).